The primary structure comprises 163 residues: Calcium-binding protein 2 (163 aa).

Gly-2 is lipidated: N-myristoyl glycine. EF-hand domains are found at residues Glu-21 to Met-56, Gly-72 to Ala-89, Ile-95 to Glu-130, and Leu-132 to Arg-163. The Ca(2+) site is built by Asp-34, Asp-36, Asp-38, Tyr-40, and Glu-45. Ca(2+) contacts are provided by Asp-108, Asn-110, Asp-112, Cys-114, Glu-119, Asp-145, Asn-147, Asp-149, and Glu-156.

The protein localises to the cytoplasm. Its subcellular location is the perinuclear region. It localises to the cell membrane. It is found in the golgi apparatus. Required for sound encoding at inner hair cells (IHCs) synapses, likely via inhibition of the inactivation of voltage-gated calcium channel of type 1.3 (Cav1.3) in the IHCs. Required for the normal transfer of light signals through the retina. The chain is Calcium-binding protein 2 (CABP2) from Bos taurus (Bovine).